The following is a 286-amino-acid chain: Phosphatidylserine decarboxylase proenzyme (286 aa).

Active-site charge relay system; for autoendoproteolytic cleavage activity residues include Asp90, His147, and Ser250. The active-site Schiff-base intermediate with substrate; via pyruvic acid; for decarboxylase activity is the Ser250. Ser250 is modified (pyruvic acid (Ser); by autocatalysis).

Belongs to the phosphatidylserine decarboxylase family. PSD-B subfamily. Prokaryotic type I sub-subfamily. Heterodimer of a large membrane-associated beta subunit and a small pyruvoyl-containing alpha subunit. Pyruvate is required as a cofactor. In terms of processing, is synthesized initially as an inactive proenzyme. Formation of the active enzyme involves a self-maturation process in which the active site pyruvoyl group is generated from an internal serine residue via an autocatalytic post-translational modification. Two non-identical subunits are generated from the proenzyme in this reaction, and the pyruvate is formed at the N-terminus of the alpha chain, which is derived from the carboxyl end of the proenzyme. The autoendoproteolytic cleavage occurs by a canonical serine protease mechanism, in which the side chain hydroxyl group of the serine supplies its oxygen atom to form the C-terminus of the beta chain, while the remainder of the serine residue undergoes an oxidative deamination to produce ammonia and the pyruvoyl prosthetic group on the alpha chain. During this reaction, the Ser that is part of the protease active site of the proenzyme becomes the pyruvoyl prosthetic group, which constitutes an essential element of the active site of the mature decarboxylase.

It localises to the cell membrane. It catalyses the reaction a 1,2-diacyl-sn-glycero-3-phospho-L-serine + H(+) = a 1,2-diacyl-sn-glycero-3-phosphoethanolamine + CO2. The protein operates within phospholipid metabolism; phosphatidylethanolamine biosynthesis; phosphatidylethanolamine from CDP-diacylglycerol: step 2/2. In terms of biological role, catalyzes the formation of phosphatidylethanolamine (PtdEtn) from phosphatidylserine (PtdSer). This is Phosphatidylserine decarboxylase proenzyme from Saccharophagus degradans (strain 2-40 / ATCC 43961 / DSM 17024).